An 80-amino-acid chain; its full sequence is Bowman-Birk type proteinase inhibitor DE-4 (80 aa).

Over residues 1–10 (DDDHSDDEPR) the composition is skewed to acidic residues. The tract at residues 1–29 (DDDHSDDEPRESESSKPCCSSCCTRSRPP) is disordered. The segment covering 15–29 (SKPCCSSCCTRSRPP) has biased composition (low complexity). 7 disulfides stabilise this stretch: Cys18–Cys71, Cys19–Cys33, Cys22–Cys67, Cys23–Cys31, Cys41–Cys48, Cys45–Cys60, and Cys50–Cys58.

It belongs to the Bowman-Birk serine protease inhibitor family.

In Philenoptera violacea (Apple-leaf), this protein is Bowman-Birk type proteinase inhibitor DE-4.